Reading from the N-terminus, the 354-residue chain is MNEAIIQLDHIDITFHQKKRVIEAVKDVTVHINQGDIYGIVGYSGAGKSTLVRVINLLQAPTNGKITVDGDVTFDQGKIQLSAEALRQKRRDIGMIFQHFNLMAQKTAKENVAFALRHSSLSKTEKEQKVIELLELVGLSERADNYPAQLSGGQKQRVAIARALANDPKILISDEATSALDPKTTKQILALLQELNRKLGLTIVMITHEMQIVKDICNRVAVMQNGVLIEEGPVLDIFSNPKEALTQEFITTATGIDEALEKINQQDIVKHLPANALLAQLKYAGTSTDEPLLNSIYRQFEVTANILYGNIEILDHIPVGDMIVVLEGQAENILAAEKALHEAGVDVSILKRGA.

In terms of domain architecture, ABC transporter spans 8 to 250 (LDHIDITFHQ…PKEALTQEFI (243 aa)). 42–49 (GYSGAGKS) provides a ligand contact to ATP.

This sequence belongs to the ABC transporter superfamily. Methionine importer (TC 3.A.1.24) family. In terms of assembly, the complex is composed of two ATP-binding proteins (MetN), two transmembrane proteins (MetI) and a solute-binding protein (MetQ).

It is found in the cell membrane. It catalyses the reaction L-methionine(out) + ATP + H2O = L-methionine(in) + ADP + phosphate + H(+). It carries out the reaction D-methionine(out) + ATP + H2O = D-methionine(in) + ADP + phosphate + H(+). In terms of biological role, part of the ABC transporter complex MetNIQ involved in methionine import. Responsible for energy coupling to the transport system. The polypeptide is Methionine import ATP-binding protein MetN (Streptococcus pyogenes serotype M4 (strain MGAS10750)).